The primary structure comprises 300 residues: Acetylglutamate kinase (300 aa).

Residues 73 to 74 (GG), R95, and N197 contribute to the substrate site.

This sequence belongs to the acetylglutamate kinase family. ArgB subfamily.

It localises to the cytoplasm. The catalysed reaction is N-acetyl-L-glutamate + ATP = N-acetyl-L-glutamyl 5-phosphate + ADP. Its pathway is amino-acid biosynthesis; L-arginine biosynthesis; N(2)-acetyl-L-ornithine from L-glutamate: step 2/4. In terms of biological role, catalyzes the ATP-dependent phosphorylation of N-acetyl-L-glutamate. In Bordetella parapertussis (strain 12822 / ATCC BAA-587 / NCTC 13253), this protein is Acetylglutamate kinase.